The sequence spans 640 residues: Probable inactive receptor kinase At3g08680 (640 aa).

Positions 1–22 are cleaved as a signal peptide; that stretch reads MMKIIAAFLFLLVTTFVSRCLS. 5 LRR repeats span residues 93–115, 117–138, 139–162, 163–185, and 186–206; these read ALRI…ILSL, FIRS…VLSH, RLVN…QNLT, QLTD…PPRL, and KYLN…VKSF. Positions 222–249 are disordered; sequence LTPCPENTTAPSPSPTTPTEGPGTTNIG. Low complexity predominate over residues 226 to 247; sequence PENTTAPSPSPTTPTEGPGTTN. A helical transmembrane segment spans residues 260–280; it reads GAIVGIAVGGSVLLFIILAII. Residues 289–315 are disordered; that stretch reads DGGQDSTAVPKAKPGRSDNKAEEFGSG. The region spanning 341-614 is the Protein kinase domain; sequence RASAEVLGKG…EEVVNMMEEI (274 aa). S343 carries the post-translational modification Phosphoserine. Residue 347 to 355 participates in ATP binding; it reads LGKGSYGTT. T364 carries the post-translational modification Phosphothreonine. An ATP-binding site is contributed by K369. 3 positions are modified to phosphothreonine: T441, T514, and T564. Positions 612-640 are disordered; that stretch reads EEIRPSGSGPGSGNRASSPEMIRSSDSPV.

The protein belongs to the protein kinase superfamily. Tyr protein kinase family.

It is found in the membrane. This is Probable inactive receptor kinase At3g08680 from Arabidopsis thaliana (Mouse-ear cress).